A 397-amino-acid chain; its full sequence is Tyrosine--tRNA ligase (397 aa).

Residues 41-50 carry the 'HIGH' region motif; it reads PTAPDLHLGH. A 'KMSKS' region motif is present at residues 225-229; it reads KMSKS. Lys-228 is an ATP binding site. The region spanning 340–396 is the S4 RNA-binding domain; it reads AFLADSGLAGSRGEAKRLIKQGALSLDGEKLDDPNTPLTAGEYVVRLGKKRFLRLIV.

Belongs to the class-I aminoacyl-tRNA synthetase family. TyrS type 2 subfamily. As to quaternary structure, homodimer.

The protein localises to the cytoplasm. It catalyses the reaction tRNA(Tyr) + L-tyrosine + ATP = L-tyrosyl-tRNA(Tyr) + AMP + diphosphate + H(+). Its function is as follows. Catalyzes the attachment of tyrosine to tRNA(Tyr) in a two-step reaction: tyrosine is first activated by ATP to form Tyr-AMP and then transferred to the acceptor end of tRNA(Tyr). The chain is Tyrosine--tRNA ligase from Oleidesulfovibrio alaskensis (strain ATCC BAA-1058 / DSM 17464 / G20) (Desulfovibrio alaskensis).